A 236-amino-acid chain; its full sequence is Uridylate kinase (236 aa).

10–13 is a binding site for ATP; sequence KLSG. Position 52 (glycine 52) interacts with UMP. 2 residues coordinate ATP: glycine 53 and arginine 57. UMP contacts are provided by residues aspartate 72 and 133–140; that span reads TGNPFFTT. Positions 160, 166, and 169 each coordinate ATP.

The protein belongs to the UMP kinase family. Homohexamer.

The protein resides in the cytoplasm. The enzyme catalyses UMP + ATP = UDP + ADP. It participates in pyrimidine metabolism; CTP biosynthesis via de novo pathway; UDP from UMP (UMPK route): step 1/1. Its activity is regulated as follows. Inhibited by UTP. Functionally, catalyzes the reversible phosphorylation of UMP to UDP. The chain is Uridylate kinase from Cupriavidus pinatubonensis (strain JMP 134 / LMG 1197) (Cupriavidus necator (strain JMP 134)).